The sequence spans 392 residues: Chorismate synthase (392 aa).

NADP(+) is bound by residues Arg-39 and Arg-45. FMN-binding positions include 128–130 (RSS), 248–249 (QA), Gly-300, 315–319 (KPIPT), and Arg-341.

Belongs to the chorismate synthase family. In terms of assembly, homotetramer. FMNH2 serves as cofactor.

The catalysed reaction is 5-O-(1-carboxyvinyl)-3-phosphoshikimate = chorismate + phosphate. Its pathway is metabolic intermediate biosynthesis; chorismate biosynthesis; chorismate from D-erythrose 4-phosphate and phosphoenolpyruvate: step 7/7. In terms of biological role, catalyzes the anti-1,4-elimination of the C-3 phosphate and the C-6 proR hydrogen from 5-enolpyruvylshikimate-3-phosphate (EPSP) to yield chorismate, which is the branch point compound that serves as the starting substrate for the three terminal pathways of aromatic amino acid biosynthesis. This reaction introduces a second double bond into the aromatic ring system. This is Chorismate synthase from Trichlorobacter lovleyi (strain ATCC BAA-1151 / DSM 17278 / SZ) (Geobacter lovleyi).